Consider the following 199-residue polypeptide: Small heat shock protein hspG4 (199 aa).

The 170-residue stretch at asparagine 30–asparagine 199 folds into the sHSP domain. Positions lysine 83–proline 105 are disordered.

Belongs to the small heat shock protein (HSP20) family.

This is Small heat shock protein hspG4 (hspG4) from Dictyostelium discoideum (Social amoeba).